The primary structure comprises 3110 residues: Huntingtin (3110 aa).

The interval 1-58 is disordered; that stretch reads MKAFESLKSFQQQQQQQQPPPQPPPPPPPPPQPPQPPPQGQPPPPPPLPGPAEEPLHR. N6-acetyllysine is present on Lys-2. Positions 18-52 are enriched in pro residues; sequence QPPPQPPPPPPPPPQPPQPPPQGQPPPPPPLPGPA. N6-acetyllysine occurs at positions 146 and 204. HEAT repeat units lie at residues 174-211 and 216-253; these read PYLVNLLPCLTRTSKRPEESVQETLAAAVPKIMASFGN and NEIKVLLKAFIANLKSSSPTVRRTAAGSAVSICQHSRR. An N6-acetyllysine modification is found at Lys-313. A phosphoserine mark is found at Ser-387, Ser-389, and Ser-402. Lys-412 carries the post-translational modification N6-acetyllysine. Positions 462–473 are interaction with ZDHHC17; that stretch reads GHDIITEQPRSQ. The disordered stretch occupies residues 487-549; the sequence is DLTSAATDGD…PDSAVTPSDS (63 aa). A compositionally biased stretch (polar residues) spans 521-549; sequence DGTQASSPISDSSQTTTEGPDSAVTPSDS. Gly-522 is lipidated: N-myristoyl glycine. A phosphoserine mark is found at Ser-611 and Ser-614. HEAT repeat units follow at residues 773–810 and 873–911; these read FSLVDCIPLLQKTLKDESSVTCKLACTAVRHCVLSLCS and KLQERVLNNVVIYLLGDEDPRVRHVAATTLTRLVPKLFY. Positions 1137–1195 are disordered; it reads KAALPSLTNPPSLSPIRRKGKEKEPGEQTSTPMSPKKGGEASTASRQSDTSGPVTASKS. Low complexity predominate over residues 1140 to 1151; it reads LPSLTNPPSLSP. 2 positions are modified to phosphoserine; by CDK5: Ser-1150 and Ser-1170. The span at 1178–1195 shows a compositional bias: polar residues; the sequence is STASRQSDTSGPVTASKS. The HEAT 5 repeat unit spans residues 1395–1432; sequence LFEPLVIKALKQYTTTTSVQLQKQVLDLLAQLVQLRVN. The residue at position 1845 (Ser-1845) is a Phosphoserine. The Nuclear export signal signature appears at 2363–2372; sequence IVVSLARLPL. Residues 2601-2628 are disordered; that stretch reads EEEWDEEEEEEADAPAPTSPPVSPVNSR. Residues 2602-2613 show a composition bias toward acidic residues; sequence EEWDEEEEEEAD.

Belongs to the huntingtin family. In terms of assembly, interacts with PFN1. Interacts through its N-terminus with PRPF40A. Interacts with PQBP1. Interacts with SETD2. Interacts with SH3GLB1. Interacts with SYVN. Interacts with TPR; the interaction is inhibited by forms of Huntingtin with expanded polyglutamine stretch. Interacts with ZDHHC13 (via ANK repeats). Interacts with ZDHHC17 (via ANK repeats). Interacts with F8A1/F8A2/F8A3. Found in a complex with F8A1/F8A2/F8A3, HTT and RAB5A; mediates the recruitment of HTT by RAB5A. Post-translationally, phosphorylation at Ser-1150 and Ser-1170 by CDK5 in response to DNA damage in nuclei of neurons protects neurons against polyglutamine expansion as well as DNA damage mediated toxicity. Cleaved by caspases downstream of the polyglutamine stretch. In terms of processing, myristoylated at Gly-522, following proteolytic cleavage at Asp-521. In terms of tissue distribution, expressed to a high degree in all the regions of the brain of adults and in meiotic cells of the testis. In addition, very low levels are detected in various non-neuronal tissues (heart, muscle, liver, lung and kidney).

It is found in the cytoplasm. Its subcellular location is the nucleus. The protein localises to the cytoplasmic vesicle. The protein resides in the autophagosome. In terms of biological role, may play a role in microtubule-mediated transport or vesicle function. Its function is as follows. Promotes the formation of autophagic vesicles. This chain is Huntingtin (Htt), found in Rattus norvegicus (Rat).